The chain runs to 229 residues: MGVQHLLKLRMASPHPHPHPGAPLAARPLSALASFFLARPSSTAAAPPPRHVTLSCSRPHCNHNQWAASRCRGTAGRRRLQVVVAMSSSAPPPPPGSVQKSEEEWEAILSPEQFRILRLKGTEYPGTGEYDKLFAEGVYECAGCGTPLYKSSTKFNSGCGWPAFYEGFPGAIARTPDPDGRRIEITCAACGGHLGHVFKGEGFNTPTDERHCVNSISLKFIPASEDSKL.

The N-terminal 71 residues, 1-71 (MGVQHLLKLR…NHNQWAASRC (71 aa)), are a transit peptide targeting the chloroplast. A MsrB domain is found at 102-223 (EEEWEAILSP…NSISLKFIPA (122 aa)). The Zn(2+) site is built by C141, C144, C187, and C190. C159 and C212 form a disulfide bridge. C212 serves as the catalytic Nucleophile.

The protein belongs to the MsrB Met sulfoxide reductase family. Zn(2+) is required as a cofactor.

The protein resides in the plastid. The protein localises to the chloroplast. It carries out the reaction L-methionyl-[protein] + [thioredoxin]-disulfide + H2O = L-methionyl-(R)-S-oxide-[protein] + [thioredoxin]-dithiol. In terms of biological role, catalyzes the reduction of methionine sulfoxide (MetSO) to methionine in proteins. Plays a protective role against oxidative stress by restoring activity to proteins that have been inactivated by methionine oxidation. MSRB family specifically reduces the MetSO R-enantiomer. This chain is Peptide methionine sulfoxide reductase B3, chloroplastic (MSRB3), found in Oryza sativa subsp. japonica (Rice).